Consider the following 287-residue polypeptide: Probable glucose uptake protein GlcU (287 aa).

Helical transmembrane passes span 7–29, 34–56, 58–75, 114–136, 156–178, 183–202, 209–228, 233–255, and 267–286; these read LIALLPALFWGSVVLINVFVGGG, IRGTTLGALIVGLGLLITGFAKF, NPTVIIVGLISGALWAFG, WSSMTQIIFGLIAMILLVTGVAL, MGILIVSTVGYVGFVVLGDIFGV, ALFFQSVGMAIGGFILSMNH, TALNLLPGVIWGIGNLFMFY, VGVATSFSLSQLLVIVSTLGGIF, and TGIWVGIIIIVIAAIILGNL.

The protein belongs to the GRP transporter (TC 2.A.7.5) family.

It is found in the cell membrane. In terms of biological role, involved in the uptake of glucose. The chain is Probable glucose uptake protein GlcU (glcU) from Staphylococcus aureus (strain MRSA252).